A 112-amino-acid chain; its full sequence is Protein NIM1-INTERACTING 3 (112 aa).

Disordered regions lie at residues Met1–Met20 and Glu77–Leu112. 2 coiled-coil regions span residues Met1 to Lys35 and Asn69 to Lys96. Residues Glu77–Glu89 are compositionally biased toward low complexity.

Belongs to the NPR1-interactor family. As to quaternary structure, interacts with NPR1 C-terminal region.

Its subcellular location is the nucleus. The polypeptide is Protein NIM1-INTERACTING 3 (Arabidopsis thaliana (Mouse-ear cress)).